The following is a 244-amino-acid chain: Phosphoadenosine 5'-phosphosulfate reductase (244 aa).

Cys239 functions as the Nucleophile; cysteine thiosulfonate intermediate in the catalytic mechanism.

The protein belongs to the PAPS reductase family. CysH subfamily.

Its subcellular location is the cytoplasm. The catalysed reaction is [thioredoxin]-disulfide + sulfite + adenosine 3',5'-bisphosphate + 2 H(+) = [thioredoxin]-dithiol + 3'-phosphoadenylyl sulfate. It functions in the pathway sulfur metabolism; hydrogen sulfide biosynthesis; sulfite from sulfate: step 3/3. In terms of biological role, catalyzes the formation of sulfite from phosphoadenosine 5'-phosphosulfate (PAPS) using thioredoxin as an electron donor. The sequence is that of Phosphoadenosine 5'-phosphosulfate reductase from Escherichia coli O6:K15:H31 (strain 536 / UPEC).